We begin with the raw amino-acid sequence, 83 residues long: Homeobox protein DLX-2 (83 aa).

Positions 1–14 (STATDSSYYTNQQH) are enriched in polar residues. Disordered regions lie at residues 1–27 (STAT…SPYA) and 63–83 (PYGT…LEPE).

The protein belongs to the distal-less homeobox family. Interacts (via homeobox DNA-binding domain) with POU4F2; this interaction enhances retinal ganglion cell (RGC) differentiation.

It localises to the nucleus. Its function is as follows. Acts as a transcriptional activator. Activates transcription of CGA/alpha-GSU, via binding to the downstream activin regulatory element (DARE) in the gene promoter. Plays a role in terminal differentiation of interneurons, such as amacrine and bipolar cells in the developing retina. Likely to play a regulatory role in the development of the ventral forebrain. May play a role in craniofacial patterning and morphogenesis. This Rattus norvegicus (Rat) protein is Homeobox protein DLX-2 (Dlx2).